A 704-amino-acid chain; its full sequence is Rabphilin-3A (704 aa).

Polar residues predominate over residues Met-1–Arg-12. The segment at Met-1–Asp-52 is disordered. In terms of domain architecture, RabBD spans Gln-44–Gly-161. The FYVE-type zinc finger occupies Gly-92–Glu-149. Zn(2+) is bound by residues Cys-98, Cys-101, Cys-115, Cys-118, Cys-123, Cys-126, Cys-141, and Cys-144. Positions Leu-167–Asp-398 are disordered. The segment covering Thr-205–Gly-214 has biased composition (basic and acidic residues). Position 229 is an omega-N-methylarginine (Arg-229). At Ser-277 the chain carries Phosphoserine. The span at Gln-279–Ser-290 shows a compositional bias: low complexity. Residues Pro-291–Gly-310 are compositionally biased toward pro residues. Positions Gln-366–Arg-380 are enriched in low complexity. The span at Pro-385–Asp-398 shows a compositional bias: acidic residues. The C2 1 domain maps to Thr-402 to Ile-524. Positions 432, 433, 439, 494, 495, 496, 502, 549, 591, 597, 651, 652, 653, and 659 each coordinate Ca(2+). The 134-residue stretch at Glu-560 to His-693 folds into the C2 2 domain. 2 positions are modified to phosphoserine: Ser-702 and Ser-703.

Interacts with RAB3B, RAB3C, RAB3D, RAB8A, RAB27A and RAB27B. Interacts with RAB3A; this interaction recruits RPH3A to synaptic vesicules. Interacts (via C2B domain) with SNAP25. Interacts with deubiquitinating enzyme CAND1; this interaction results in the deubiquitination of RPH3A. Interacts with GRIN2A and DLG4; this ternary complex regulates NMDA receptor composition at postsynaptic membranes. Interacts with SNCA. The cofactor is Ca(2+). Ubiquitinated. Deubiquitinated by CAND1 to prevent its degradation. As to expression, specifically expressed in brain.

The protein localises to the cytoplasmic vesicle. It localises to the secretory vesicle. The protein resides in the synaptic vesicle membrane. Its subcellular location is the cell projection. It is found in the dendritic spine. The protein localises to the postsynaptic cell membrane. It localises to the membrane. In terms of biological role, plays an essential role in docking and fusion steps of regulated exocytosis. At the presynaptic level, RPH3A is recruited by RAB3A to the synaptic vesicle membrane in a GTP-dependent manner where it modulates synaptic vesicle trafficking and calcium-triggered neurotransmitter release. In the post-synaptic compartment, forms a ternary complex with GRIN2A and DLG4 and regulates NMDA receptor stability. Also plays a role in the exocytosis of arginine vasopressin hormone. This Bos taurus (Bovine) protein is Rabphilin-3A (RPH3A).